The primary structure comprises 125 residues: Large ribosomal subunit protein bL12 (125 aa).

This sequence belongs to the bacterial ribosomal protein bL12 family. As to quaternary structure, homodimer. Part of the ribosomal stalk of the 50S ribosomal subunit. Forms a multimeric L10(L12)X complex, where L10 forms an elongated spine to which 2 to 4 L12 dimers bind in a sequential fashion. Binds GTP-bound translation factors.

Forms part of the ribosomal stalk which helps the ribosome interact with GTP-bound translation factors. Is thus essential for accurate translation. The sequence is that of Large ribosomal subunit protein bL12 from Helicobacter acinonychis (strain Sheeba).